We begin with the raw amino-acid sequence, 616 residues long: Dihydroxy-acid dehydratase (616 aa).

Aspartate 81 contributes to the Mg(2+) binding site. Position 122 (cysteine 122) interacts with [2Fe-2S] cluster. Mg(2+) is bound by residues aspartate 123 and lysine 124. Lysine 124 carries the N6-carboxylysine modification. Cysteine 195 is a [2Fe-2S] cluster binding site. Glutamate 491 provides a ligand contact to Mg(2+). Catalysis depends on serine 517, which acts as the Proton acceptor.

The protein belongs to the IlvD/Edd family. Homodimer. It depends on [2Fe-2S] cluster as a cofactor. Mg(2+) is required as a cofactor.

It carries out the reaction (2R)-2,3-dihydroxy-3-methylbutanoate = 3-methyl-2-oxobutanoate + H2O. It catalyses the reaction (2R,3R)-2,3-dihydroxy-3-methylpentanoate = (S)-3-methyl-2-oxopentanoate + H2O. Its pathway is amino-acid biosynthesis; L-isoleucine biosynthesis; L-isoleucine from 2-oxobutanoate: step 3/4. It functions in the pathway amino-acid biosynthesis; L-valine biosynthesis; L-valine from pyruvate: step 3/4. In terms of biological role, functions in the biosynthesis of branched-chain amino acids. Catalyzes the dehydration of (2R,3R)-2,3-dihydroxy-3-methylpentanoate (2,3-dihydroxy-3-methylvalerate) into 2-oxo-3-methylpentanoate (2-oxo-3-methylvalerate) and of (2R)-2,3-dihydroxy-3-methylbutanoate (2,3-dihydroxyisovalerate) into 2-oxo-3-methylbutanoate (2-oxoisovalerate), the penultimate precursor to L-isoleucine and L-valine, respectively. The chain is Dihydroxy-acid dehydratase from Salmonella schwarzengrund (strain CVM19633).